The primary structure comprises 350 residues: MDDNKKKALAAALGQIERQFGKGAVMRMGDHDRQAIPAISTGSLGLDIALGIGGLPKGRIVEIYGPESSGKTTLTLSVIAQAQKAGATCAFVDAEHALDPEYAGKLGVNVDDLLVSQPDTGEQALEITDMLVRSNAVDVIIVDSVAALVPKAEIEGEMGDMHVGLQARLMSQALRKITGNIKNANCLVIFINQIRMKIGVMFGSPETTTGGNALKFYASVRLDIRRTGAVKEGDEVVGSETRVKIVKNKVAPPFRQAEFQILYGKGIYLNGEIIDLGVLHGFLEKSGAWYSYQGNKIGQGKANSAKFLQDNPEIGNALEKQIREKLLTASPDVKANPVKETEDDMADADI.

65–72 is an ATP binding site; that stretch reads GPESSGKT. Residues 329–350 are disordered; the sequence is ASPDVKANPVKETEDDMADADI. Residues 341–350 are compositionally biased toward acidic residues; the sequence is TEDDMADADI.

This sequence belongs to the RecA family.

It is found in the cytoplasm. In terms of biological role, can catalyze the hydrolysis of ATP in the presence of single-stranded DNA, the ATP-dependent uptake of single-stranded DNA by duplex DNA, and the ATP-dependent hybridization of homologous single-stranded DNAs. It interacts with LexA causing its activation and leading to its autocatalytic cleavage. The sequence is that of Protein RecA from Pseudomonas fluorescens (strain ATCC BAA-477 / NRRL B-23932 / Pf-5).